A 600-amino-acid chain; its full sequence is Elongation factor 4 (600 aa).

The region spanning 5-187 (KYIRNFSIIA…AIVNKLHPPK (183 aa)) is the tr-type G domain. Residues 17–22 (DHGKST) and 134–137 (NKID) each bind GTP.

It belongs to the TRAFAC class translation factor GTPase superfamily. Classic translation factor GTPase family. LepA subfamily.

It localises to the cell inner membrane. The enzyme catalyses GTP + H2O = GDP + phosphate + H(+). Functionally, required for accurate and efficient protein synthesis under certain stress conditions. May act as a fidelity factor of the translation reaction, by catalyzing a one-codon backward translocation of tRNAs on improperly translocated ribosomes. Back-translocation proceeds from a post-translocation (POST) complex to a pre-translocation (PRE) complex, thus giving elongation factor G a second chance to translocate the tRNAs correctly. Binds to ribosomes in a GTP-dependent manner. This Rickettsia akari (strain Hartford) protein is Elongation factor 4.